Here is a 246-residue protein sequence, read N- to C-terminus: Flagellar brake protein YcgR (246 aa).

The region spanning Gln122–Val234 is the PilZ domain.

This sequence belongs to the YcgR family. In terms of assembly, monomer. Interacts with the flagellar basal bodies.

The protein resides in the bacterial flagellum basal body. In terms of biological role, acts as a flagellar brake, regulating swimming and swarming in a bis-(3'-5') cyclic diguanylic acid (c-di-GMP)-dependent manner. Binds 1 c-di-GMP dimer per subunit. Increasing levels of c-di-GMP lead to decreased motility. The polypeptide is Flagellar brake protein YcgR (Chromobacterium violaceum (strain ATCC 12472 / DSM 30191 / JCM 1249 / CCUG 213 / NBRC 12614 / NCIMB 9131 / NCTC 9757 / MK)).